We begin with the raw amino-acid sequence, 378 residues long: 1-acyl-sn-glycerol-3-phosphate acyltransferase delta (378 aa).

A helical membrane pass occupies residues 11–31; it reads FLCHLVFCYVFIASGLIVNAI. Residues 96–101 carry the HXXXXD motif motif; that stretch reads HKFEID. Transmembrane regions (helical) follow at residues 125–145, 311–331, and 338–358; these read ELAY…IFCT, WLFW…SMVS, and LASL…MIGV.

The protein belongs to the 1-acyl-sn-glycerol-3-phosphate acyltransferase family.

It localises to the endoplasmic reticulum membrane. It catalyses the reaction a 1-acyl-sn-glycero-3-phosphate + an acyl-CoA = a 1,2-diacyl-sn-glycero-3-phosphate + CoA. It carries out the reaction (4Z,7Z,10Z,13Z,16Z,19Z)-docosahexaenoyl-CoA + 1-hexadecanoyl-sn-glycero-3-phosphate = 1-hexadecanoyl-2-(4Z,7Z,10Z,13Z,16Z,19Z-docosahexaenoyl)-sn-glycero-3-phosphate + CoA. The enzyme catalyses 1-octadecanoyl-sn-glycero-3-phosphate + (9Z,12Z)-octadecadienoyl-CoA = 1-octadecanoyl-2-(9Z,12Z-octadecadienoyl)-sn-glycero-3-phosphate + CoA. The catalysed reaction is 1-octadecanoyl-sn-glycero-3-phosphate + (4Z,7Z,10Z,13Z,16Z,19Z)-docosahexaenoyl-CoA = 1-octadecanoyl-2-(4Z,7Z,10Z,13Z,16Z,19Z-docosahexaenoyl)-sn-glycero-3-phosphate + CoA. It catalyses the reaction (4Z,7Z,10Z,13Z,16Z,19Z)-docosahexaenoyl-CoA + 1-(9Z-octadecenoyl)-sn-glycero-3-phosphate = 1-(9Z-octadecenoyl)-2-(4Z,7Z,10Z,13Z,16Z,19Z-docosahexaenoyl)-sn-glycero-3-phosphate + CoA. Its pathway is phospholipid metabolism; CDP-diacylglycerol biosynthesis; CDP-diacylglycerol from sn-glycerol 3-phosphate: step 2/3. Its function is as follows. Converts 1-acyl-sn-glycerol-3-phosphate (lysophosphatidic acid or LPA) into 1,2-diacyl-sn-glycerol-3-phosphate (phosphatidic acid or PA) by incorporating an acyl moiety at the sn-2 position of the glycerol backbone. Exhibits high acyl-CoA specificity for polyunsaturated fatty acyl-CoA, especially docosahexaenoyl-CoA (22:6-CoA, DHA-CoA). The protein is 1-acyl-sn-glycerol-3-phosphate acyltransferase delta (Agpat4) of Rattus norvegicus (Rat).